Consider the following 1849-residue polypeptide: NADH-ubiquinone oxidoreductase chain 5 (1849 aa).

Helical transmembrane passes span tyrosine 76–tyrosine 93, leucine 98–tyrosine 120, tyrosine 190–tryptophan 212, leucine 222–tyrosine 244, histidine 279–serine 301, leucine 316–tyrosine 338, leucine 358–valine 380, valine 390–isoleucine 412, isoleucine 419–leucine 441, leucine 483–valine 505, leucine 510–valine 532, isoleucine 536–isoleucine 558, leucine 565–isoleucine 587, isoleucine 621–valine 640, tryptophan 683–phenylalanine 705, leucine 718–leucine 740, isoleucine 745–leucine 767, proline 797–valine 819, isoleucine 868–leucine 890, leucine 905–leucine 927, leucine 966–glutamate 988, proline 1008–leucine 1030, leucine 1073–phenylalanine 1095, leucine 1105–leucine 1127, threonine 1172–isoleucine 1194, valine 1219–histidine 1241, glycine 1248–tyrosine 1270, isoleucine 1296–leucine 1318, phenylalanine 1330–tyrosine 1352, methionine 1357–isoleucine 1379, leucine 1418–threonine 1440, valine 1444–leucine 1466, alanine 1478–leucine 1500, valine 1504–threonine 1526, lysine 1533–phenylalanine 1555, leucine 1559–histidine 1581, isoleucine 1602–alanine 1624, valine 1639–isoleucine 1661, leucine 1719–glycine 1741, valine 1773–asparagine 1795, and isoleucine 1802–leucine 1824.

It belongs to the complex I subunit 5 family.

The protein localises to the hydrogenosome membrane. The enzyme catalyses a ubiquinone + NADH + 5 H(+)(in) = a ubiquinol + NAD(+) + 4 H(+)(out). The chain is NADH-ubiquinone oxidoreductase chain 5 (nad5) from Nyctotherus ovalis.